A 58-amino-acid polypeptide reads, in one-letter code: Rho-conotoxin TIA (58 aa).

The N-terminal stretch at 1-16 is a signal peptide; sequence MFTVFLLVVLATTGVS. The propeptide occupies 17–38; sequence FTLDRASDGGNAVAKKSDVTAR. Residues 40-42 are interaction with ADRA1B; sequence NWR. Intrachain disulfides connect cysteine 43–cysteine 49 and cysteine 44–cysteine 57. The interval 45-47 is lacks the Ser-Xaa-Pro motif that is crucial for potent interaction with nAChR; that stretch reads LIP. Cysteine 57 carries the cysteine amide modification.

Belongs to the conotoxin A superfamily. As to expression, expressed by the venom duct.

Its subcellular location is the secreted. Its function is as follows. Allosteric inhibitor of alpha-1B adrenergic receptors (ADRA1B). Binds to an allosteric modulatory site on transmembrane helix 6 and 7 at the base of extracellular loop 3 of ADRA1B. Also weakly inhibits alpha-1A (ADRA1A) and alpha-1D (ADRA1D) adrenergic receptors in a competitive manner. Potently inhibits contractions of vas deferens, spleen and aorta in response to noradrenaline. May also inhibits nicotinic acetylcholine receptors with a possible distinct nAChR binding mode from other alpha-conotoxins, due to a different three residue motif (lacks the Ser-Xaa-Pro motif). This Conus tulipa (Fish-hunting cone snail) protein is Rho-conotoxin TIA.